The following is a 615-amino-acid chain: 1-deoxy-D-xylulose-5-phosphate synthase (615 aa).

Thiamine diphosphate-binding positions include H72 and 111 to 113 (GHS). D142 lines the Mg(2+) pocket. Thiamine diphosphate-binding positions include 143 to 144 (GA), N171, Y278, and E360. N171 serves as a coordination point for Mg(2+).

It belongs to the transketolase family. DXPS subfamily. As to quaternary structure, homodimer. The cofactor is Mg(2+). Requires thiamine diphosphate as cofactor.

The enzyme catalyses D-glyceraldehyde 3-phosphate + pyruvate + H(+) = 1-deoxy-D-xylulose 5-phosphate + CO2. The protein operates within metabolic intermediate biosynthesis; 1-deoxy-D-xylulose 5-phosphate biosynthesis; 1-deoxy-D-xylulose 5-phosphate from D-glyceraldehyde 3-phosphate and pyruvate: step 1/1. In terms of biological role, catalyzes the acyloin condensation reaction between C atoms 2 and 3 of pyruvate and glyceraldehyde 3-phosphate to yield 1-deoxy-D-xylulose-5-phosphate (DXP). The polypeptide is 1-deoxy-D-xylulose-5-phosphate synthase (Campylobacter jejuni subsp. jejuni serotype O:23/36 (strain 81-176)).